The following is a 337-amino-acid chain: UDP-3-O-acylglucosamine N-acyltransferase (337 aa).

Histidine 238 acts as the Proton acceptor in catalysis.

The protein belongs to the transferase hexapeptide repeat family. LpxD subfamily. As to quaternary structure, homotrimer.

The catalysed reaction is a UDP-3-O-[(3R)-3-hydroxyacyl]-alpha-D-glucosamine + a (3R)-hydroxyacyl-[ACP] = a UDP-2-N,3-O-bis[(3R)-3-hydroxyacyl]-alpha-D-glucosamine + holo-[ACP] + H(+). It functions in the pathway bacterial outer membrane biogenesis; LPS lipid A biosynthesis. Its function is as follows. Catalyzes the N-acylation of UDP-3-O-acylglucosamine using 3-hydroxyacyl-ACP as the acyl donor. Is involved in the biosynthesis of lipid A, a phosphorylated glycolipid that anchors the lipopolysaccharide to the outer membrane of the cell. The chain is UDP-3-O-acylglucosamine N-acyltransferase from Xanthomonas oryzae pv. oryzae (strain MAFF 311018).